Here is a 202-residue protein sequence, read N- to C-terminus: Polyamine-modulated factor 1 (202 aa).

The span at Met-1 to Pro-15 shows a compositional bias: basic and acidic residues. The disordered stretch occupies residues Met-1–Asp-26. Positions Glu-153 to Leu-194 form a coiled coil.

In terms of assembly, component of the MIS12 complex composed of MIS12, DSN1, NSL1 and PMF1. Interacts with COPS7A. Interacts via its coiled-coil domain with the leucine-zipper domain of NFE2L2. The interaction with NFE2L2 is required for the transcriptional regulation of SSAT.

It localises to the nucleus. The protein resides in the chromosome. The protein localises to the centromere. It is found in the kinetochore. In terms of biological role, part of the MIS12 complex which is required for normal chromosome alignment and segregation and for kinetochore formation during mitosis. May act as a cotranscription partner of NFE2L2 involved in regulation of polyamine-induced transcription of SSAT. The chain is Polyamine-modulated factor 1 from Mus musculus (Mouse).